We begin with the raw amino-acid sequence, 229 residues long: Casparian strip membrane protein 1 (229 aa).

Topologically, residues 1–67 are cytoplasmic; that stretch reads MSTSEAGAAA…FRRADRGSRC (67 aa). The chain crosses the membrane as a helical span at residues 68 to 88; the sequence is VALLDFVLRVAAFGPALAAAI. Over 89-115 the chain is Extracellular; that stretch reads ATGTSDETLSVFTQFFQFHARFDDFPA. The chain crosses the membrane as a helical span at residues 116-136; that stretch reads LLFFMVANAIAAGYLVLSLPF. Topologically, residues 137-157 are cytoplasmic; sequence SAVIVLRPQAIGLRHLLLVCD. A helical membrane pass occupies residues 158–178; that stretch reads MIIAALLTAAAAAAAAIVDLA. Residues 179–205 lie on the Extracellular side of the membrane; the sequence is HSGNLRANWVPICMQFHGFCQRTSGAV. A helical transmembrane segment spans residues 206–226; the sequence is VGSFLAVLVLLFLVILAAFAI. Residues 227–229 lie on the Cytoplasmic side of the membrane; the sequence is RKR.

It belongs to the Casparian strip membrane proteins (CASP) family. As to quaternary structure, homodimer and heterodimers.

It localises to the cell membrane. In terms of biological role, regulates membrane-cell wall junctions and localized cell wall deposition. Required for establishment of the Casparian strip membrane domain (CSD) and the subsequent formation of Casparian strips, a cell wall modification of the root endodermis that determines an apoplastic barrier between the intraorganismal apoplasm and the extraorganismal apoplasm and prevents lateral diffusion. The chain is Casparian strip membrane protein 1 from Sorghum bicolor (Sorghum).